Reading from the N-terminus, the 117-residue chain is DNA-directed RNA polymerase subunit omega (117 aa).

Belongs to the RNA polymerase subunit omega family. In terms of assembly, the RNAP catalytic core consists of 2 alpha, 1 beta, 1 beta' and 1 omega subunit. When a sigma factor is associated with the core the holoenzyme is formed, which can initiate transcription.

It carries out the reaction RNA(n) + a ribonucleoside 5'-triphosphate = RNA(n+1) + diphosphate. Functionally, promotes RNA polymerase assembly. Latches the N- and C-terminal regions of the beta' subunit thereby facilitating its interaction with the beta and alpha subunits. This is DNA-directed RNA polymerase subunit omega from Cereibacter sphaeroides (strain ATCC 17029 / ATH 2.4.9) (Rhodobacter sphaeroides).